The following is a 223-amino-acid chain: Ethylene-inducing xylanase 1 (223 aa).

Residues 1–19 (MVSFTSLLAAFSVVSGVLT) form the signal peptide. One can recognise a GH11 domain in the interval 34-223 (KRTPSSTGTS…SSGSATMTVS (190 aa)). The active-site Nucleophile is the E119. The nuclear localization signal stretch occupies residues 174–184 (RRTKRTSGSVN). E210 functions as the Proton donor in the catalytic mechanism.

The protein belongs to the glycosyl hydrolase 11 (cellulase G) family.

The protein resides in the secreted. The protein localises to the host nucleus. It catalyses the reaction Endohydrolysis of (1-&gt;4)-beta-D-xylosidic linkages in xylans.. Its pathway is glycan degradation; xylan degradation. In terms of biological role, endo-1,4-beta-xylanase involved in the hydrolysis of xylan, a major structural heterogeneous polysaccharide found in plant biomass representing the second most abundant polysaccharide in the biosphere, after cellulose. Acts as an effector that localizes to the host nucleus to contribute to the virulence process. Induces host innate immunity responses; triggers BAK1-and SOBIR1-dependent cell death, salicylic acid signaling and jasmonic acid signaling. Does not exhibit any cell death when transiently expressed in N.benthamiana. The protein is Ethylene-inducing xylanase 1 of Verticillium dahliae (strain VdLs.17 / ATCC MYA-4575 / FGSC 10137) (Verticillium wilt).